Reading from the N-terminus, the 297-residue chain is Non-structural protein VP10 (297 aa).

In Oryza latifolia (Indian wild rice), this protein is Non-structural protein VP10.